The following is a 361-amino-acid chain: 3-dehydroquinate synthase (361 aa).

Residues 72 to 77, 130 to 131, lysine 142, and lysine 151 each bind NAD(+); these read SGEKEK and TT. 3 residues coordinate Zn(2+): glutamate 184, histidine 247, and histidine 264.

Belongs to the sugar phosphate cyclases superfamily. Dehydroquinate synthase family. The cofactor is Co(2+). Zn(2+) is required as a cofactor. NAD(+) serves as cofactor.

It is found in the cytoplasm. It carries out the reaction 7-phospho-2-dehydro-3-deoxy-D-arabino-heptonate = 3-dehydroquinate + phosphate. It functions in the pathway metabolic intermediate biosynthesis; chorismate biosynthesis; chorismate from D-erythrose 4-phosphate and phosphoenolpyruvate: step 2/7. Catalyzes the conversion of 3-deoxy-D-arabino-heptulosonate 7-phosphate (DAHP) to dehydroquinate (DHQ). The protein is 3-dehydroquinate synthase of Bacillus cereus (strain G9842).